The primary structure comprises 350 residues: Mitogen-activated protein kinase HOG1 (350 aa).

Residues 20–299 enclose the Protein kinase domain; the sequence is YTDLQPVGMG…AAQALAHEYL (280 aa). Residues 26–34 and lysine 49 each bind ATP; that span reads VGMGAFGLV. Aspartate 141 (proton acceptor) is an active-site residue. A TXY motif is present at residues 171–173; that stretch reads TGY.

Belongs to the protein kinase superfamily. Ser/Thr protein kinase family. MAP kinase subfamily. HOG1 sub-subfamily. Mg(2+) serves as cofactor.

It is found in the cytoplasm. The protein resides in the nucleus. The enzyme catalyses L-seryl-[protein] + ATP = O-phospho-L-seryl-[protein] + ADP + H(+). It carries out the reaction L-threonyl-[protein] + ATP = O-phospho-L-threonyl-[protein] + ADP + H(+). Its function is as follows. Proline-directed serine/threonine-protein kinase involved in a signal transduction pathway that is activated by changes in the osmolarity of the extracellular environment. Controls osmotic regulation of transcription of target genes. Involved in environmental stress response. Via the downstream MSN2 transcription factor, may play roles in the regulation of growth, conidiation, trap development, fatty acid metabolism and secondary metabolites biosynthesis. The chain is Mitogen-activated protein kinase HOG1 from Arthrobotrys oligospora (strain ATCC 24927 / CBS 115.81 / DSM 1491) (Nematode-trapping fungus).